The sequence spans 714 residues: Polyribonucleotide nucleotidyltransferase (714 aa).

Positions 489 and 495 each coordinate Mg(2+). Positions 556-615 constitute a KH domain; the sequence is PKIDTIKIDVDKIKVVIGKGGETIDKIIAETGVKIDIDEEGNVSIYSSDQDAINRAKEII. Residues 625–693 enclose the S1 motif domain; that stretch reads GEVYHAKVVR…DKGRIDASMK (69 aa). A disordered region spans residues 691-714; sequence SMKALVPRPPKPEKSEAKKEGKHD. Residues 700–714 are compositionally biased toward basic and acidic residues; sequence PKPEKSEAKKEGKHD.

Belongs to the polyribonucleotide nucleotidyltransferase family. Mg(2+) is required as a cofactor.

The protein localises to the cytoplasm. The catalysed reaction is RNA(n+1) + phosphate = RNA(n) + a ribonucleoside 5'-diphosphate. Involved in mRNA degradation. Catalyzes the phosphorolysis of single-stranded polyribonucleotides processively in the 3'- to 5'-direction. This is Polyribonucleotide nucleotidyltransferase from Streptococcus equi subsp. equi (strain 4047).